The primary structure comprises 217 residues: Non-structural protein NS3 (217 aa).

This sequence belongs to the orbivirus NS3 family.

Functionally, may play a role in the release of virions from infected cells. In Camelus dromedarius (Dromedary), this protein is Non-structural protein NS3 (Segment-10).